Reading from the N-terminus, the 227-residue chain is Phosphoglycolate phosphatase (227 aa).

The active-site Nucleophile is the aspartate 8. Mg(2+) contacts are provided by aspartate 8 and aspartate 10. Residue lysine 150 participates in substrate binding. The Mg(2+) site is built by aspartate 173 and aspartate 177.

It belongs to the archaeal SPP-like hydrolase family. The cofactor is Mg(2+).

The catalysed reaction is 2-phosphoglycolate + H2O = glycolate + phosphate. In terms of biological role, catalyzes the dephosphorylation of 2-phosphoglycolate. This Sulfolobus acidocaldarius (strain ATCC 33909 / DSM 639 / JCM 8929 / NBRC 15157 / NCIMB 11770) protein is Phosphoglycolate phosphatase.